Reading from the N-terminus, the 260-residue chain is 3'-5' ssDNA/RNA exonuclease TatD (260 aa).

Residues Glu-92, His-128, and His-153 each coordinate a divalent metal cation.

It belongs to the metallo-dependent hydrolases superfamily. TatD-type hydrolase family. TatD subfamily. Monomer. Mg(2+) serves as cofactor.

The protein resides in the cytoplasm. Its function is as follows. 3'-5' exonuclease that prefers single-stranded DNA and RNA. May play a role in the H(2)O(2)-induced DNA damage repair. In Yersinia pseudotuberculosis serotype O:3 (strain YPIII), this protein is 3'-5' ssDNA/RNA exonuclease TatD.